A 124-amino-acid chain; its full sequence is Acidic phospholipase A2 BA1 (124 aa).

7 disulfide bridges follow: Cys26-Cys116, Cys28-Cys44, Cys43-Cys95, Cys49-Cys124, Cys50-Cys88, Cys57-Cys81, and Cys75-Cys86. Ca(2+) contacts are provided by Tyr27, Gly29, and Gly31. His47 is a catalytic residue. A Ca(2+)-binding site is contributed by Asp48. Residue Asp89 is part of the active site.

It belongs to the phospholipase A2 family. Group II subfamily. D49 sub-subfamily. Ca(2+) serves as cofactor. Expressed by the venom gland.

Its subcellular location is the secreted. It catalyses the reaction a 1,2-diacyl-sn-glycero-3-phosphocholine + H2O = a 1-acyl-sn-glycero-3-phosphocholine + a fatty acid + H(+). Functionally, PLA2 catalyzes the calcium-dependent hydrolysis of the 2-acyl groups in 3-sn-phosphoglycerides. The protein is Acidic phospholipase A2 BA1 of Gloydius halys (Chinese water mocassin).